Consider the following 391-residue polypeptide: 3-ketoacyl-CoA thiolase (391 aa).

Residue cysteine 95 is the Acyl-thioester intermediate of the active site. Residues histidine 347 and cysteine 377 each act as proton acceptor in the active site.

Belongs to the thiolase-like superfamily. Thiolase family. As to quaternary structure, heterotetramer of two alpha chains (FadB) and two beta chains (FadA).

The protein localises to the cytoplasm. The catalysed reaction is an acyl-CoA + acetyl-CoA = a 3-oxoacyl-CoA + CoA. It participates in lipid metabolism; fatty acid beta-oxidation. Catalyzes the final step of fatty acid oxidation in which acetyl-CoA is released and the CoA ester of a fatty acid two carbons shorter is formed. The chain is 3-ketoacyl-CoA thiolase from Alcanivorax borkumensis (strain ATCC 700651 / DSM 11573 / NCIMB 13689 / SK2).